We begin with the raw amino-acid sequence, 67 residues long: Large ribosomal subunit protein bL31 (67 aa).

Belongs to the bacterial ribosomal protein bL31 family. Type A subfamily. Part of the 50S ribosomal subunit.

Its function is as follows. Binds the 23S rRNA. This Finegoldia magna (strain ATCC 29328 / DSM 20472 / WAL 2508) (Peptostreptococcus magnus) protein is Large ribosomal subunit protein bL31.